A 330-amino-acid chain; its full sequence is GTPase Obg (330 aa).

The Obg domain occupies 1–159; it reads MQFIDQARIT…WPLQLELKLL (159 aa). The 169-residue stretch at 160–328 folds into the OBG-type G domain; that stretch reads AEVGIIGLPN…LLERVWKELG (169 aa). Residues 166–173, 191–195, 213–216, 280–283, and 309–311 each bind ATP; these read GLPNAGKS, FTTLV, DIPG, NKQE, and SAA. Positions 173 and 193 each coordinate Mg(2+).

It belongs to the TRAFAC class OBG-HflX-like GTPase superfamily. OBG GTPase family. Monomer. Mg(2+) is required as a cofactor.

It is found in the cytoplasm. Functionally, an essential GTPase which binds GTP, GDP and possibly (p)ppGpp with moderate affinity, with high nucleotide exchange rates and a fairly low GTP hydrolysis rate. Plays a role in control of the cell cycle, stress response, ribosome biogenesis and in those bacteria that undergo differentiation, in morphogenesis control. The polypeptide is GTPase Obg (Parasynechococcus marenigrum (strain WH8102)).